The sequence spans 116 residues: NADH-ubiquinone oxidoreductase chain 3 (116 aa).

A run of 3 helical transmembrane segments spans residues 4–24 (FMVMIMLTLTLSSIMALLAFW), 56–76 (FFLVAILFLLFDLEIALLLPS), and 87–107 (FTLLWASLFVLLLTLGLIYEW).

The protein belongs to the complex I subunit 3 family.

The protein resides in the mitochondrion membrane. It carries out the reaction a ubiquinone + NADH + 5 H(+)(in) = a ubiquinol + NAD(+) + 4 H(+)(out). Core subunit of the mitochondrial membrane respiratory chain NADH dehydrogenase (Complex I) that is believed to belong to the minimal assembly required for catalysis. Complex I functions in the transfer of electrons from NADH to the respiratory chain. The immediate electron acceptor for the enzyme is believed to be ubiquinone. The chain is NADH-ubiquinone oxidoreductase chain 3 (MT-ND3) from Petromyzon marinus (Sea lamprey).